Here is a 631-residue protein sequence, read N- to C-terminus: Dolichyl-diphosphooligosaccharide--protein glycosyltransferase subunit 2 (631 aa).

The signal sequence occupies residues 1–22 (MALPGSSTVFLLALTIIASTQA). The Lumenal portion of the chain corresponds to 23 to 540 (LTPTHYLTKH…REPEKRPPTV (518 aa)). N-linked (GlcNAc...) asparagine glycosylation is present at Asn-106. Lys-154 is covalently cross-linked (Glycyl lysine isopeptide (Lys-Gly) (interchain with G-Cter in ubiquitin)). The helical transmembrane segment at 541-561 (VSNTFTALILSPLLLLFALWI) threads the bilayer. Residues 562–571 (RIGANVSNFT) lie on the Cytoplasmic side of the membrane. The helical transmembrane segment at 572-592 (FAPSTIVFHLGHAAMLGLMYV) threads the bilayer. Over 593 to 596 (YWTQ) the chain is Lumenal. A helical membrane pass occupies residues 597–617 (LNMFQTLKYLAILGSVTFLAG). At 618–631 (NRMLAQQAIKRTAH) the chain is on the cytoplasmic side.

Belongs to the SWP1 family. Component of the oligosaccharyltransferase (OST) complex. OST exists in two different complex forms which contain common core subunits RPN1, RPN2, OST48, OST4, DAD1 and TMEM258, either STT3A or STT3B as catalytic subunits, and form-specific accessory subunits. STT3A complex assembly occurs through the formation of 3 subcomplexes. Subcomplex 1 contains RPN1 and TMEM258, subcomplex 2 contains the STT3A-specific subunits STT3A, DC2/OSTC, and KCP2 as well as the core subunit OST4, and subcomplex 3 contains RPN2, DAD1, and OST48. The STT3A complex can form stable complexes with the Sec61 complex or with both the Sec61 and TRAP complexes. Interacts with DDI2. Interacts with TMEM35A/NACHO.

The protein localises to the endoplasmic reticulum. The protein resides in the endoplasmic reticulum membrane. It participates in protein modification; protein glycosylation. In terms of biological role, subunit of the oligosaccharyl transferase (OST) complex that catalyzes the initial transfer of a defined glycan (Glc(3)Man(9)GlcNAc(2) in eukaryotes) from the lipid carrier dolichol-pyrophosphate to an asparagine residue within an Asn-X-Ser/Thr consensus motif in nascent polypeptide chains, the first step in protein N-glycosylation. N-glycosylation occurs cotranslationally and the complex associates with the Sec61 complex at the channel-forming translocon complex that mediates protein translocation across the endoplasmic reticulum (ER). All subunits are required for a maximal enzyme activity. In Bos taurus (Bovine), this protein is Dolichyl-diphosphooligosaccharide--protein glycosyltransferase subunit 2.